Reading from the N-terminus, the 362-residue chain is Cobalt-precorrin-5B C(1)-methyltransferase (362 aa).

It belongs to the CbiD family.

It catalyses the reaction Co-precorrin-5B + S-adenosyl-L-methionine = Co-precorrin-6A + S-adenosyl-L-homocysteine. The protein operates within cofactor biosynthesis; adenosylcobalamin biosynthesis; cob(II)yrinate a,c-diamide from sirohydrochlorin (anaerobic route): step 6/10. In terms of biological role, catalyzes the methylation of C-1 in cobalt-precorrin-5B to form cobalt-precorrin-6A. The protein is Cobalt-precorrin-5B C(1)-methyltransferase of Burkholderia multivorans (strain ATCC 17616 / 249).